Reading from the N-terminus, the 469-residue chain is 3-isopropylmalate dehydratase large subunit (469 aa).

3 residues coordinate [4Fe-4S] cluster: Cys347, Cys408, and Cys411.

It belongs to the aconitase/IPM isomerase family. LeuC type 1 subfamily. As to quaternary structure, heterodimer of LeuC and LeuD. [4Fe-4S] cluster is required as a cofactor.

It catalyses the reaction (2R,3S)-3-isopropylmalate = (2S)-2-isopropylmalate. It functions in the pathway amino-acid biosynthesis; L-leucine biosynthesis; L-leucine from 3-methyl-2-oxobutanoate: step 2/4. In terms of biological role, catalyzes the isomerization between 2-isopropylmalate and 3-isopropylmalate, via the formation of 2-isopropylmaleate. The polypeptide is 3-isopropylmalate dehydratase large subunit (Haemophilus influenzae (strain PittEE)).